A 166-amino-acid chain; its full sequence is ATP synthase subunit b 1 (166 aa).

A helical transmembrane segment spans residues 7–29 (FWTALAFVLFFVIFGRKLWVAIT).

It belongs to the ATPase B chain family. F-type ATPases have 2 components, F(1) - the catalytic core - and F(0) - the membrane proton channel. F(1) has five subunits: alpha(3), beta(3), gamma(1), delta(1), epsilon(1). F(0) has three main subunits: a(1), b(2) and c(10-14). The alpha and beta chains form an alternating ring which encloses part of the gamma chain. F(1) is attached to F(0) by a central stalk formed by the gamma and epsilon chains, while a peripheral stalk is formed by the delta and b chains.

Its subcellular location is the cell inner membrane. F(1)F(0) ATP synthase produces ATP from ADP in the presence of a proton or sodium gradient. F-type ATPases consist of two structural domains, F(1) containing the extramembraneous catalytic core and F(0) containing the membrane proton channel, linked together by a central stalk and a peripheral stalk. During catalysis, ATP synthesis in the catalytic domain of F(1) is coupled via a rotary mechanism of the central stalk subunits to proton translocation. Its function is as follows. Component of the F(0) channel, it forms part of the peripheral stalk, linking F(1) to F(0). The polypeptide is ATP synthase subunit b 1 (Gluconobacter oxydans (strain 621H) (Gluconobacter suboxydans)).